Reading from the N-terminus, the 134-residue chain is Small ribosomal subunit protein uS12 (134 aa).

3-methylthioaspartic acid is present on aspartate 89. Residues 109–134 (KRNVSRSKYGAKKGKAGAAPTTGKKK) are disordered. Over residues 111-123 (NVSRSKYGAKKGK) the composition is skewed to basic residues. The segment covering 124–134 (AGAAPTTGKKK) has biased composition (low complexity).

It belongs to the universal ribosomal protein uS12 family. As to quaternary structure, part of the 30S ribosomal subunit. Contacts proteins S8 and S17. May interact with IF1 in the 30S initiation complex.

Functionally, with S4 and S5 plays an important role in translational accuracy. Interacts with and stabilizes bases of the 16S rRNA that are involved in tRNA selection in the A site and with the mRNA backbone. Located at the interface of the 30S and 50S subunits, it traverses the body of the 30S subunit contacting proteins on the other side and probably holding the rRNA structure together. The combined cluster of proteins S8, S12 and S17 appears to hold together the shoulder and platform of the 30S subunit. This chain is Small ribosomal subunit protein uS12, found in Wolinella succinogenes (strain ATCC 29543 / DSM 1740 / CCUG 13145 / JCM 31913 / LMG 7466 / NCTC 11488 / FDC 602W) (Vibrio succinogenes).